The sequence spans 91 residues: Gas vesicle protein K (91 aa).

The protein belongs to the gas vesicle GvpK family.

The protein localises to the gas vesicle. Might be involved in nucleating gas vesicle formation. Gas vesicles are hollow, gas filled proteinaceous nanostructures found in some microorganisms. It is not clear what function gas vesicles perform in soil bacteria. The sequence is that of Gas vesicle protein K from Streptomyces sp. (strain CB03234).